The sequence spans 25 residues: Xenoposin precursor fragment BM3 (25 aa).

In terms of tissue distribution, expressed by the skin glands.

The protein localises to the secreted. Functionally, antimicrobial peptide. This chain is Xenoposin precursor fragment BM3, found in Xenopus boumbaensis (Mawa clawed frog).